We begin with the raw amino-acid sequence, 254 residues long: Proteasome activator complex subunit 3 (254 aa).

Ala-2 is subject to N-acetylalanine. Phosphoserine occurs at positions 17 and 24. Lys-195 is subject to N6-acetyllysine; by P300/CBP. Residue Ser-247 is modified to Phosphoserine; by CHEK2.

The protein belongs to the PA28 family. In terms of assembly, homoheptamer; the stability of the heptamer is essential for the specific activation of the trypsine-like subunit and inhibition of the chymotrypsin-like and postglutamyl-preferring (PGPH) subunits of the proteasome. Interacts with p53/TP53 and MDM2. Interacts with MAP3K3. Associates with the proteasome. Interacts with CCAR2. Interacts with PSME3IP1 (via C-terminus); the interaction is direct and promotes the association of PSME3 with the 20S proteasome. Interacts with COIL; the interaction is inhibited by PSME3IP1. (Microbial infection) Interacts with human cytomegalovirus UL27. In terms of processing, phosphorylated by MAP3K3. Phosphorylation at Ser-247 promotes its association with CCAR2. Post-translationally, acetylation at the major site Lys-195 is important for oligomerization and ability to degrade its target substrates. Deacetylated by SIRT1.

The protein localises to the nucleus. The protein resides in the cytoplasm. In terms of biological role, subunit of the 11S REG-gamma (also called PA28-gamma) proteasome regulator, a doughnut-shaped homoheptamer which associates with the proteasome. 11S REG-gamma activates the trypsin-like catalytic subunit of the proteasome but inhibits the chymotrypsin-like and postglutamyl-preferring (PGPH) subunits. Facilitates the MDM2-p53/TP53 interaction which promotes ubiquitination- and MDM2-dependent proteasomal degradation of p53/TP53, limiting its accumulation and resulting in inhibited apoptosis after DNA damage. May also be involved in cell cycle regulation. Mediates CCAR2 and CHEK2-dependent SIRT1 inhibition. This Homo sapiens (Human) protein is Proteasome activator complex subunit 3 (PSME3).